Reading from the N-terminus, the 450-residue chain is Solute carrier family 52, riboflavin transporter, member 2 (450 aa).

5 helical membrane-spanning segments follow: residues 14–34 (LLVA…WVEL), 47–67 (LPSY…LVTL), 79–99 (IPIQ…APLW), 114–136 (FLTL…LPFL), and 147–167 (FFLG…AQGV). N-linked (GlcNAc...) asparagine glycosylation occurs at asparagine 178. The chain crosses the membrane as a helical span at residues 201–221 (FFWVLTALLGTSAAAFQGLLL). The segment at 230 to 268 (ATMGTGLRVETPGTEEEEEEEEASPLQEPPGQVASIVSS) is disordered. Acidic residues predominate over residues 242–252 (GTEEEEEEEEA). 5 consecutive transmembrane segments (helical) span residues 282–302 (ACLL…LPAV), 317–337 (LAVV…MAVL), 344–364 (LYGL…LAVL), 371–391 (VGTS…AGVF), and 409–429 (ALLA…IAMF).

Belongs to the riboflavin transporter family. As to expression, highly expressed in the placenta and small intestine, moderately in the kidney, colon, lung, prostate, uterus, and thymus, and weakly in all other tissues.

The protein localises to the cell membrane. It catalyses the reaction riboflavin(in) = riboflavin(out). With respect to regulation, riboflavin transport is Na(+)-independent but moderately pH-sensitive. Activity is strongly inhibited by riboflavin analogs, such as lumiflavin. Weakly inhibited by flavin adenine dinucleotide (FAD) and flavin mononucleotide (FMN). Functionally, plasma membrane transporter mediating the uptake by cells of the water soluble vitamin B2/riboflavin that plays a key role in biochemical oxidation-reduction reactions of the carbohydrate, lipid, and amino acid metabolism. May also act as a receptor for 4-hydroxybutyrate. The protein is Solute carrier family 52, riboflavin transporter, member 2 (Slc52a2) of Rattus norvegicus (Rat).